The sequence spans 196 residues: Alpha-crystallin A chain (196 aa).

M1 carries the N-acetylmethionine modification. The tract at residues 1–63 (MDVTIQHPWF…RTVLDSGISE (63 aa)) is required for complex formation with BFSP1 and BFSP2. Q6 carries the post-translational modification Deamidated glutamine; partial. Position 45 is a phosphoserine (S45). A Deamidated glutamine; partial modification is found at Q50. The region spanning 76–185 (HAGNPKNNPI…GHSERAIPVS (110 aa)) is the sHSP domain. 2 positions are modified to N6-acetyllysine: K93 and K122. H123 provides a ligand contact to Zn(2+). N124 carries the deamidated asparagine; partial modification. Zn(2+) contacts are provided by E125 and H130. The residue at position 145 (S145) is a Phosphoserine. Position 146 is a deamidated asparagine; partial (N146). Positions 168 to 196 (KVQSGLDAGHSERAIPVSREEKPSSAPSS) are disordered. At Q170 the chain carries Deamidated glutamine; partial. The segment covering 176 to 190 (GHSERAIPVSREEKP) has biased composition (basic and acidic residues). H177 provides a ligand contact to Zn(2+). O-linked (GlcNAc) serine glycosylation occurs at S185.

This sequence belongs to the small heat shock protein (HSP20) family. In terms of assembly, heteromer composed of three CRYAA and one CRYAB subunits. Inter-subunit bridging via zinc ions enhances stability, which is crucial as there is no protein turn over in the lens. Can also form homodimers and homotetramers (dimers of dimers) which serve as the building blocks of homooligomers. Within homooligomers, the zinc-binding motif is created from residues of 3 different molecules. His-123 and Glu-125 from one molecule are ligands of the zinc ion, and His-130 and His-177 residues from additional molecules complete the site with tetrahedral coordination geometry. Part of a complex required for lens intermediate filament formation composed of BFSP1, BFSP2 and CRYAA. In terms of processing, acetylation at Lys-93 may increase chaperone activity. Undergoes age-dependent proteolytical cleavage at the C-terminus.

It is found in the cytoplasm. Its subcellular location is the nucleus. Its function is as follows. Contributes to the transparency and refractive index of the lens. Acts as a chaperone, preventing aggregation of various proteins under a wide range of stress conditions. Required for the correct formation of lens intermediate filaments as part of a complex composed of BFSP1, BFSP2 and CRYAA. This chain is Alpha-crystallin A chain (CRYAA), found in Mesocricetus auratus (Golden hamster).